The primary structure comprises 261 residues: Cytochrome c oxidase subunit 3 (261 aa).

The Mitochondrial matrix segment spans residues 1-15 (MTHQTHAYHMVNPSP). A helical membrane pass occupies residues 16–34 (WPLTGAMSALLLTSGLIMW). At 35 to 40 (FHFNSY) the chain is on the mitochondrial intermembrane side. A helical membrane pass occupies residues 41-66 (TLLLLGLLTNLISSYQWWRDIVREGT). At 67 to 72 (YQGHHT) the chain is on the mitochondrial matrix side. Residues 73-105 (KIVQKGLRYGMILFIISEVFFFLGFFWAFYHSS) traverse the membrane as a helical segment. The Mitochondrial intermembrane portion of the chain corresponds to 106-128 (LAPTPELGGCWPPTGISPLNPLE). The chain crosses the membrane as a helical span at residues 129–152 (VPLLNTSILLASGVSITWAHHSLM). The Mitochondrial matrix segment spans residues 153-155 (EGN). Residues 156-183 (RKQMLQALTITIALGLYFTALQAMEYYE) traverse the membrane as a helical segment. The Mitochondrial intermembrane portion of the chain corresponds to 184-190 (ASFTISD). Residues 191-223 (GVYGSTFFVATGFHGLHVIIGTTFLITCLVRQT) traverse the membrane as a helical segment. The Mitochondrial matrix segment spans residues 224–232 (LYHFTSNHH). The helical transmembrane segment at 233 to 256 (FGFEAAAWYWHFVDVVWLFLYVSI) threads the bilayer. The Mitochondrial intermembrane portion of the chain corresponds to 257–261 (YWWGS).

This sequence belongs to the cytochrome c oxidase subunit 3 family. As to quaternary structure, component of the cytochrome c oxidase (complex IV, CIV), a multisubunit enzyme composed of 14 subunits. The complex is composed of a catalytic core of 3 subunits MT-CO1, MT-CO2 and MT-CO3, encoded in the mitochondrial DNA, and 11 supernumerary subunits COX4I, COX5A, COX5B, COX6A, COX6B, COX6C, COX7A, COX7B, COX7C, COX8 and NDUFA4, which are encoded in the nuclear genome. The complex exists as a monomer or a dimer and forms supercomplexes (SCs) in the inner mitochondrial membrane with NADH-ubiquinone oxidoreductase (complex I, CI) and ubiquinol-cytochrome c oxidoreductase (cytochrome b-c1 complex, complex III, CIII), resulting in different assemblies (supercomplex SCI(1)III(2)IV(1) and megacomplex MCI(2)III(2)IV(2)).

The protein localises to the mitochondrion inner membrane. The enzyme catalyses 4 Fe(II)-[cytochrome c] + O2 + 8 H(+)(in) = 4 Fe(III)-[cytochrome c] + 2 H2O + 4 H(+)(out). Functionally, component of the cytochrome c oxidase, the last enzyme in the mitochondrial electron transport chain which drives oxidative phosphorylation. The respiratory chain contains 3 multisubunit complexes succinate dehydrogenase (complex II, CII), ubiquinol-cytochrome c oxidoreductase (cytochrome b-c1 complex, complex III, CIII) and cytochrome c oxidase (complex IV, CIV), that cooperate to transfer electrons derived from NADH and succinate to molecular oxygen, creating an electrochemical gradient over the inner membrane that drives transmembrane transport and the ATP synthase. Cytochrome c oxidase is the component of the respiratory chain that catalyzes the reduction of oxygen to water. Electrons originating from reduced cytochrome c in the intermembrane space (IMS) are transferred via the dinuclear copper A center (CU(A)) of subunit 2 and heme A of subunit 1 to the active site in subunit 1, a binuclear center (BNC) formed by heme A3 and copper B (CU(B)). The BNC reduces molecular oxygen to 2 water molecules using 4 electrons from cytochrome c in the IMS and 4 protons from the mitochondrial matrix. The protein is Cytochrome c oxidase subunit 3 (MT-CO3) of Ornithorhynchus anatinus (Duckbill platypus).